We begin with the raw amino-acid sequence, 131 residues long: Profilin-5 (131 aa).

A disulfide bridge connects residues Cys13 and Cys115. An Involved in PIP2 interaction motif is present at residues 81–97; sequence VVIRGKKGTGGITIKKT. At Thr111 the chain carries Phosphothreonine.

It belongs to the profilin family. Multimer. Occurs in many kinds of cells as a complex with monomeric actin in a 1:1 ratio. Phosphorylated by MAP kinases. As to expression, expressed in vegetative tissues. Present in shoots, roots and coleoptiles. Also detected in endosperm and pollen.

The protein localises to the cytoplasm. It is found in the cytoskeleton. With respect to regulation, actin binding is enhanced by calcium Ca(2+). Binds to actin and affects the structure of the cytoskeleton. At high concentrations, profilin prevents the polymerization of actin, whereas it enhances it at low concentrations. By binding to PIP2, it inhibits the formation of IP3 and DG. Has a high affinity for poly-proline. This chain is Profilin-5, found in Zea mays (Maize).